A 1006-amino-acid polypeptide reads, in one-letter code: Zinc finger protein ZFPM1 (1006 aa).

Residues 1-13 show a composition bias toward basic residues; the sequence is MSRRKQSNPRQIK. Disordered stretches follow at residues 1–93 and 114–133; these read MSRR…DELE and SWGP…RQAE. The span at 15–25 shows a compositional bias: basic and acidic residues; it reads SLGDMEAREEV. Residues 42-62 show a composition bias toward pro residues; sequence APSPPSADVNSPPPLPPPTSP. The span at 66–79 shows a compositional bias: basic and acidic residues; the sequence is KELEGQEPEPRPTE. A phosphoserine mark is found at serine 84 and serine 128. Over residues 121 to 130 the composition is skewed to polar residues; the sequence is SVQTRASSPR. The CCHC FOG-type 1 zinc finger occupies 235 to 268; it reads VINKDVFPCKDCGIWYRSERNLQAHLLYYCASRQ. Zn(2+) contacts are provided by cysteine 243, cysteine 246, histidine 259, and cysteine 264. Serine 272 is subject to Phosphoserine. 3 consecutive C2H2-type zinc fingers follow at residues 290–314, 320–342, and 348–371; these read RVCP…MRSH, FVCL…LKVH, and GVCH…VTNH. The interaction with TACC3 stretch occupies residues 330–341; the sequence is TTKANCERHLKV. Position 384 is a phosphoserine (serine 384). 3 disordered regions span residues 384–409, 438–460, and 473–515; these read SPGA…HTAL, NGEA…AAPR, and APIL…SPVP. A compositionally biased stretch (low complexity) spans 485 to 515; sequence APSRTPSPRSPAPARVKAELSSPTPGSSPVP. A phosphoserine mark is found at serine 491 and serine 494. The CCHC FOG-type 2 zinc finger occupies 571–604; it reads PGAPKGATCFECEITFSNVNNYYVHKRLYCSGRR. Residues cysteine 579, cysteine 582, histidine 595, and cysteine 600 each contribute to the Zn(2+) site. The interval 605–681 is disordered; it reads APEDAPAARR…SVDDAEDDPS (77 aa). Pro residues predominate over residues 617 to 629; sequence APPGPARAPPGQP. 2 positions are modified to phosphoserine: serine 638 and serine 671. A CCHC FOG-type 3 zinc finger spans residues 677 to 710; that stretch reads EDDPSRTLCEACNIRFSRHETYTVHKRYYCASRH. Zn(2+)-binding residues include cysteine 685, cysteine 688, histidine 701, and cysteine 706. The tract at residues 708–810 is disordered; sequence SRHDPPPRRP…PRRPLPGAPA (103 aa). Pro residues-rich tracts occupy residues 715–735 and 754–769; these read RRPA…PSPA and APPP…PESP. Over residues 780-791 the composition is skewed to low complexity; sequence GLAPARSPGPAA. Serine 786 is modified (phosphoserine). The interval 794-800 is interaction with CTBP2; the sequence is PIDLSKK. The CCHC FOG-type 4 zinc finger occupies 811-844; the sequence is PALADYHECTACRVSFHSLEAYLAHKKYSCPAAP. Zn(2+) is bound by residues cysteine 819, cysteine 822, histidine 835, and cysteine 840. The segment at 854 to 877 adopts a C2H2-type 4 zinc-finger fold; sequence AACPYCPPNGPVRGDLLEHFRLAH. The tract at residues 889–971 is disordered; the sequence is GVEARTPADR…KGTPAPLPNG (83 aa). Phosphoserine occurs at positions 901, 909, 914, and 935. Residues 925–950 show a composition bias toward pro residues; sequence PQEPPPGPPPSPAAAPEAVPPPPAPP. The CCHC FOG-type 5 zinc finger occupies 968 to 1001; that stretch reads LPNGNHRYCRLCNIKFSSLSTFIAHKKYYCSSHA. 4 residues coordinate Zn(2+): cysteine 976, cysteine 979, histidine 992, and cysteine 997.

This sequence belongs to the FOG (Friend of GATA) family. Interacts with corepressor CTBP2; this interaction is however not essential for corepressor activity. Interacts with the N-terminal zinc-finger of GATA1, GATA2 and probably GATA3. In terms of tissue distribution, mainly expressed in hematopoietic tissues. Also expressed in adult cerebellum, stomach, lymph node, liver and pancreas. Expressed in fetal heart, liver and spleen.

The protein localises to the nucleus. Its function is as follows. Transcription regulator that plays an essential role in erythroid and megakaryocytic cell differentiation. Essential cofactor that acts via the formation of a heterodimer with transcription factors of the GATA family GATA1, GATA2 and GATA3. Such heterodimer can both activate or repress transcriptional activity, depending on the cell and promoter context. The heterodimer formed with GATA proteins is essential to activate expression of genes such as NFE2, ITGA2B, alpha- and beta-globin, while it represses expression of KLF1. May be involved in regulation of some genes in gonads. May also be involved in cardiac development, in a non-redundant way with ZFPM2/FOG2. This chain is Zinc finger protein ZFPM1 (ZFPM1), found in Homo sapiens (Human).